Consider the following 319-residue polypeptide: Polyprenyl transferase macG (319 aa).

9 helical membrane-spanning segments follow: residues Ala-28 to Met-45, Val-48 to Ala-68, Ala-106 to Gly-126, Pro-127 to Lys-147, Phe-152 to Ile-172, Ala-182 to Thr-202, Val-224 to Leu-244, Ser-249 to Leu-269, and Leu-289 to Ile-309.

The protein belongs to the UbiA prenyltransferase family. Requires Mg(2+) as cofactor.

It is found in the membrane. The protein operates within secondary metabolite biosynthesis; terpenoid biosynthesis. In terms of biological role, polyprenyl transferase; part of the gene cluster that mediates the biosynthesis of macrophorins, isoprenoid epoxycyclohexenones containing cyclized drimane moieties. The first step of the pathway is the synthesis of 6-methylsalicylic acid (6-MSA) by the polyketide synthase macA. 6-MSA is then converted to m-cresol by the decarboxylase macB. The cytochrome P450 monooxygenase macC then catalyzes the oxidation of m-cresol to toluquinol. Epoxidation of toluquinol is then performed by the short chain dehydrogenase macD, with the help of macE, and a further prenylation by macG leads to 7-deacetoxyyanuthone A. The next step is the hydroxylation of C-22 of 7-deacetoxyyanuthone A by the cytochrome P450 monooxygenase macH to yield 22-deacetylyanuthone A. O-Mevalon transferase macI then attaches mevalon to the hydroxyl group of 22-deacetylyanuthone A to produce yanuthone E. The terpene cyclase macJ catalyzes the cyclization of 22-deacetylyanuthone A to macrophorin A. MacJ is also able to catalyze cyclization of yanuthone E and 7-deacetoxyyanuthone A to their corresponding macrophorins. The macJ products can be further modified by macH and macJ, as well as by the FAD-dependent monooxygenase macF, to produce additional macrophorins, including 4'-oxomacrophorin A, 4'-oxomacrophorin D and 4'-oxomacrophorin E. The chain is Polyprenyl transferase macG from Penicillium terrestre.